The following is a 567-amino-acid chain: Thiol:disulfide interchange protein DsbD (567 aa).

The first 19 residues, 1-19 (MAQRIFTLILLLCSTSAFA), serve as a signal peptide directing secretion. 2 disulfides stabilise this stretch: Cys122–Cys128 and Cys185–Cys307. Transmembrane regions (helical) follow at residues 170-192 (ALWA…MYPL), 212-234 (LAFI…VAAA), 246-268 (YVLI…LFTL), 297-319 (GAIA…LLYI), 326-348 (WLGG…LVTV), 358-380 (GPWM…VFLL), and 387-409 (AWGL…ITSL). One can recognise a Thioredoxin domain in the interval 435–567 (QDWAFGSPSA…FSAHLHDRQP (133 aa)). Cys482 and Cys485 are joined by a disulfide.

This sequence belongs to the thioredoxin family. DsbD subfamily.

Its subcellular location is the cell inner membrane. The catalysed reaction is [protein]-dithiol + NAD(+) = [protein]-disulfide + NADH + H(+). It carries out the reaction [protein]-dithiol + NADP(+) = [protein]-disulfide + NADPH + H(+). Functionally, required to facilitate the formation of correct disulfide bonds in some periplasmic proteins and for the assembly of the periplasmic c-type cytochromes. Acts by transferring electrons from cytoplasmic thioredoxin to the periplasm. This transfer involves a cascade of disulfide bond formation and reduction steps. The protein is Thiol:disulfide interchange protein DsbD of Salmonella typhimurium (strain LT2 / SGSC1412 / ATCC 700720).